The sequence spans 189 residues: GMP synthase [glutamine-hydrolyzing] subunit A (189 aa).

The region spanning 5–189 is the Glutamine amidotransferase type-1 domain; sequence KILVVNNYGQ…TNFLEICEKY (185 aa). Cys-79 (nucleophile) is an active-site residue. Catalysis depends on residues His-166 and Glu-168.

Heterodimer composed of a glutamine amidotransferase subunit (A) and a GMP-binding subunit (B).

The catalysed reaction is XMP + L-glutamine + ATP + H2O = GMP + L-glutamate + AMP + diphosphate + 2 H(+). Its pathway is purine metabolism; GMP biosynthesis; GMP from XMP (L-Gln route): step 1/1. In terms of biological role, catalyzes the synthesis of GMP from XMP. The sequence is that of GMP synthase [glutamine-hydrolyzing] subunit A from Methanosarcina barkeri (strain Fusaro / DSM 804).